The primary structure comprises 205 residues: Glycerol-3-phosphate acyltransferase (205 aa).

Helical transmembrane passes span 5 to 25 (LALGIWAASYLAGSLPAGYLA), 54 to 74 (GPAAAVLLFDVFKGLFAVWLA), 87 to 107 (IVLGAGLAAIVGHSWPVWLAF), 117 to 137 (VGLLLGMHWPVALTVAAVWGV), 138 to 158 (CFAVTRIVSFASIVAAAATPL), and 162 to 182 (LWRAPLPFTLFGLLGGIYIVW).

Belongs to the PlsY family. As to quaternary structure, probably interacts with PlsX.

Its subcellular location is the cell inner membrane. The enzyme catalyses an acyl phosphate + sn-glycerol 3-phosphate = a 1-acyl-sn-glycero-3-phosphate + phosphate. Its pathway is lipid metabolism; phospholipid metabolism. Functionally, catalyzes the transfer of an acyl group from acyl-phosphate (acyl-PO(4)) to glycerol-3-phosphate (G3P) to form lysophosphatidic acid (LPA). This enzyme utilizes acyl-phosphate as fatty acyl donor, but not acyl-CoA or acyl-ACP. This Gloeobacter violaceus (strain ATCC 29082 / PCC 7421) protein is Glycerol-3-phosphate acyltransferase.